The chain runs to 404 residues: Sulfate adenylyltransferase (404 aa).

It belongs to the sulfate adenylyltransferase family.

It catalyses the reaction sulfate + ATP + H(+) = adenosine 5'-phosphosulfate + diphosphate. It participates in sulfur metabolism; hydrogen sulfide biosynthesis; sulfite from sulfate: step 1/3. The polypeptide is Sulfate adenylyltransferase (Chlorobaculum tepidum (strain ATCC 49652 / DSM 12025 / NBRC 103806 / TLS) (Chlorobium tepidum)).